Here is a 1958-residue protein sequence, read N- to C-terminus: E3 ubiquitin-protein ligase ubr1 (1958 aa).

The UBR-type zinc finger occupies 94–166 (SKCGHIFRKG…GDVSCKIHSH (73 aa)). The RING-type; atypical zinc finger occupies 1182–1334 (CLLCQEELKD…MKEFLCPLCK (153 aa)).

This sequence belongs to the E3 ubiquitin-protein ligase UBR1-like family.

It carries out the reaction S-ubiquitinyl-[E2 ubiquitin-conjugating enzyme]-L-cysteine + [acceptor protein]-L-lysine = [E2 ubiquitin-conjugating enzyme]-L-cysteine + N(6)-ubiquitinyl-[acceptor protein]-L-lysine.. It participates in protein modification; protein ubiquitination. Ubiquitin ligase protein which is a component of the N-end rule pathway. Recognizes and binds to proteins bearing specific N-terminal residues that are destabilizing according to the N-end rule, leading to their ubiquitination and subsequent degradation. This Schizosaccharomyces pombe (strain 972 / ATCC 24843) (Fission yeast) protein is E3 ubiquitin-protein ligase ubr1 (ubr1).